Consider the following 384-residue polypeptide: Queuine tRNA-ribosyltransferase (384 aa).

Asp103 (proton acceptor) is an active-site residue. Residues 103–107 (DSGGF), Asp157, Gln200, and Gly227 contribute to the substrate site. An RNA binding region spans residues 258 to 264 (GVGTYRE). Asp277 acts as the Nucleophile in catalysis. The segment at 282-286 (TRLAR) is RNA binding; important for wobble base 34 recognition. 4 residues coordinate Zn(2+): Cys315, Cys317, Cys320, and His346.

It belongs to the queuine tRNA-ribosyltransferase family. Homodimer. Within each dimer, one monomer is responsible for RNA recognition and catalysis, while the other monomer binds to the replacement base PreQ1. It depends on Zn(2+) as a cofactor.

The catalysed reaction is 7-aminomethyl-7-carbaguanine + guanosine(34) in tRNA = 7-aminomethyl-7-carbaguanosine(34) in tRNA + guanine. It functions in the pathway tRNA modification; tRNA-queuosine biosynthesis. In terms of biological role, catalyzes the base-exchange of a guanine (G) residue with the queuine precursor 7-aminomethyl-7-deazaguanine (PreQ1) at position 34 (anticodon wobble position) in tRNAs with GU(N) anticodons (tRNA-Asp, -Asn, -His and -Tyr). Catalysis occurs through a double-displacement mechanism. The nucleophile active site attacks the C1' of nucleotide 34 to detach the guanine base from the RNA, forming a covalent enzyme-RNA intermediate. The proton acceptor active site deprotonates the incoming PreQ1, allowing a nucleophilic attack on the C1' of the ribose to form the product. After dissociation, two additional enzymatic reactions on the tRNA convert PreQ1 to queuine (Q), resulting in the hypermodified nucleoside queuosine (7-(((4,5-cis-dihydroxy-2-cyclopenten-1-yl)amino)methyl)-7-deazaguanosine). This Synechococcus elongatus (strain ATCC 33912 / PCC 7942 / FACHB-805) (Anacystis nidulans R2) protein is Queuine tRNA-ribosyltransferase.